The chain runs to 332 residues: NAD-dependent protein deacetylase hst2 (332 aa).

The Deacetylase sirtuin-type domain occupies 7–269 (KHVDSSKHLE…RALCKLLGWS (263 aa)). NAD(+) is bound by residues 35-55 (GAGI…TGIY) and 118-121 (QNID). The Proton acceptor role is filled by His-138. Cys-146, Cys-149, Cys-170, and Cys-173 together coordinate Zn(2+). NAD(+)-binding positions include 210 to 212 (GTS), 235 to 237 (NRE), and Cys-255.

It belongs to the sirtuin family. Class I subfamily. It depends on Zn(2+) as a cofactor.

It localises to the cytoplasm. Its subcellular location is the nucleus. The enzyme catalyses N(6)-acetyl-L-lysyl-[protein] + NAD(+) + H2O = 2''-O-acetyl-ADP-D-ribose + nicotinamide + L-lysyl-[protein]. In terms of biological role, NAD-dependent histone deacetylase, which could function in telomeric silencing, cell cycle progression and chromosome stability. The polypeptide is NAD-dependent protein deacetylase hst2 (hst2) (Schizosaccharomyces pombe (strain 972 / ATCC 24843) (Fission yeast)).